The primary structure comprises 465 residues: Mothers against decapentaplegic homolog 5 (465 aa).

T2 is modified (N-acetylthreonine). Residues 13 to 137 form the MH1 domain; it reads PAVKRLLGWK…YKRVESPVLP (125 aa). Zn(2+) contacts are provided by C65, C110, C122, and H127. A disordered region spans residues 163–243; the sequence is NEPHMPQNAT…GQDNSQPMDT (81 aa). The segment covering 169–182 has biased composition (polar residues); sequence QNATFPDSFHQPNS. A compositionally biased stretch (pro residues) spans 186–197; the sequence is PLSPNSPYPPSP. The span at 198–214 shows a compositional bias: low complexity; it reads ASSTYPNSPASSGPGSP. A compositionally biased stretch (polar residues) spans 234–243; that stretch reads GQDNSQPMDT. An MH2 domain is found at 271–465; that stretch reads WCSIVYYELN…SPLNPISSVS (195 aa). Phosphoserine occurs at positions 463 and 465.

Belongs to the dwarfin/SMAD family. Homodimer. Forms trimers with the co-SMAD SMAD4. Interacts with PEBP2-alpha subunit and SMURF1. Interacts with SUV39H1 and SUV39H2. Interacts (via MH2 domain) with LEMD3. Interacts with WWP1. Interacts with TMEM119. Interacts with ZNF8. Interacts with RANBP3L. Interacts with HK1. Interacts with HGS; this interaction attenuates BMP signaling. Post-translationally, phosphorylated on serine by BMP (bone morphogenetic proteins) type 1 receptor kinase. Ubiquitin-mediated proteolysis by SMAD-specific E3 ubiquitin ligase SMURF1.

The protein localises to the cytoplasm. It localises to the nucleus. The protein resides in the mitochondrion. Its function is as follows. Transcriptional regulator that plays a role in various cellular processes including embryonic development, cell differentiation, angiogenesis and tissue homeostasis. Upon BMP ligand binding to their receptors at the cell surface, is phosphorylated by activated type I BMP receptors (BMPRIs) and associates with SMAD4 to form a heteromeric complex which translocates into the nucleus acting as transcription factor. In turn, the hetero-trimeric complex recognizes cis-regulatory elements containing Smad Binding Elements (SBEs) to modulate the outcome of the signaling network. Non-phosphorylated SMAD5 has a cytoplasmic role in energy metabolism regulation by promoting mitochondrial respiration and glycolysis in response to cytoplasmic pH changes. Mechanistically, interacts with hexokinase 1/HK1 and thereby accelerates glycolysis. The protein is Mothers against decapentaplegic homolog 5 (Smad5) of Rattus norvegicus (Rat).